Here is a 170-residue protein sequence, read N- to C-terminus: Protein SprT (170 aa).

The SprT-like domain maps to 23–164; it reads QLARQHFSVE…CRQCGDKLKF (142 aa). H78 contributes to the Zn(2+) binding site. Residue E79 is part of the active site. H82 contributes to the Zn(2+) binding site.

Belongs to the SprT family. Requires Zn(2+) as cofactor.

Its subcellular location is the cytoplasm. In Serratia proteamaculans (strain 568), this protein is Protein SprT.